The chain runs to 189 residues: 3-isopropylmalate dehydratase small subunit (189 aa).

The protein belongs to the LeuD family. LeuD type 1 subfamily. As to quaternary structure, heterodimer of LeuC and LeuD.

It carries out the reaction (2R,3S)-3-isopropylmalate = (2S)-2-isopropylmalate. It functions in the pathway amino-acid biosynthesis; L-leucine biosynthesis; L-leucine from 3-methyl-2-oxobutanoate: step 2/4. Functionally, catalyzes the isomerization between 2-isopropylmalate and 3-isopropylmalate, via the formation of 2-isopropylmaleate. This chain is 3-isopropylmalate dehydratase small subunit, found in Francisella philomiragia subsp. philomiragia (strain ATCC 25017 / CCUG 19701 / FSC 153 / O#319-036).